We begin with the raw amino-acid sequence, 387 residues long: Succinate--CoA ligase [ADP-forming] subunit beta (387 aa).

One can recognise an ATP-grasp domain in the interval 9 to 244 (KHILSKFGVN…YDEEIKEEIE (236 aa)). Residues K46, 53 to 55 (GRG), E99, C102, and E107 each bind ATP. 2 residues coordinate Mg(2+): N199 and D213. Residues N264 and 321–323 (GIM) each bind substrate.

Belongs to the succinate/malate CoA ligase beta subunit family. Heterotetramer of two alpha and two beta subunits. Mg(2+) is required as a cofactor.

The catalysed reaction is succinate + ATP + CoA = succinyl-CoA + ADP + phosphate. It catalyses the reaction GTP + succinate + CoA = succinyl-CoA + GDP + phosphate. It participates in carbohydrate metabolism; tricarboxylic acid cycle; succinate from succinyl-CoA (ligase route): step 1/1. Succinyl-CoA synthetase functions in the citric acid cycle (TCA), coupling the hydrolysis of succinyl-CoA to the synthesis of either ATP or GTP and thus represents the only step of substrate-level phosphorylation in the TCA. The beta subunit provides nucleotide specificity of the enzyme and binds the substrate succinate, while the binding sites for coenzyme A and phosphate are found in the alpha subunit. The protein is Succinate--CoA ligase [ADP-forming] subunit beta of Ehrlichia chaffeensis (strain ATCC CRL-10679 / Arkansas).